Consider the following 430-residue polypeptide: Adenylosuccinate synthetase (430 aa).

GTP is bound by residues 12–18 (GDEGKGK) and 40–42 (GHT). Residue Asp-13 is the Proton acceptor of the active site. Mg(2+)-binding residues include Asp-13 and Gly-40. Residues 13-16 (DEGK), 38-41 (NAGH), Thr-130, Arg-144, Gln-224, Thr-239, and Arg-303 contribute to the IMP site. The Proton donor role is filled by His-41. A substrate-binding site is contributed by 299 to 305 (TVTGRKR). Residues Arg-305, 331 to 333 (KLD), and 413 to 415 (STS) each bind GTP.

This sequence belongs to the adenylosuccinate synthetase family. Homodimer. Mg(2+) serves as cofactor.

The protein localises to the cytoplasm. The enzyme catalyses IMP + L-aspartate + GTP = N(6)-(1,2-dicarboxyethyl)-AMP + GDP + phosphate + 2 H(+). Its pathway is purine metabolism; AMP biosynthesis via de novo pathway; AMP from IMP: step 1/2. Functionally, plays an important role in the de novo pathway of purine nucleotide biosynthesis. Catalyzes the first committed step in the biosynthesis of AMP from IMP. This Parvibaculum lavamentivorans (strain DS-1 / DSM 13023 / NCIMB 13966) protein is Adenylosuccinate synthetase.